Consider the following 336-residue polypeptide: MEPRAAVLKLIEHKHLTALEAESFMNHVMKGEVSEILLSSFLTAMRFNGESVEEVLGCTLALRKNALRPKTVFPFDLLDTCGTGGDGQGTINISTLSAIVLASLGIKVAKHGNRSVSSHTGSSDILTRLGYQTETTQEEVEAHLVNRGFTFLFAPMWHPSMKHAGPVRKELGFRTVFNMIGPLSNPFSPQFQIIGVYQPELMELFIKVLQSLGLKRALVCHSRDGLDEFSIFQITDYTFLENGVISRHSFDPKILGLSSLNKEEVYASSSDHAEVLARKVLNSESIAGTHAVALNAGAGLFVMGKIDTIEQGYQIAKEAILSGKTKKYFEDLISKE.

5-phospho-alpha-D-ribose 1-diphosphate is bound by residues glycine 82, 85–86 (GD), threonine 90, 92–95 (NIST), 110–118 (KHGNRSVSS), and serine 122. Residue glycine 82 coordinates anthranilate. Serine 94 is a Mg(2+) binding site. Asparagine 113 lines the anthranilate pocket. Anthranilate is bound at residue arginine 168. Residues aspartate 227 and glutamate 228 each coordinate Mg(2+).

This sequence belongs to the anthranilate phosphoribosyltransferase family. As to quaternary structure, homodimer. Mg(2+) is required as a cofactor.

It carries out the reaction N-(5-phospho-beta-D-ribosyl)anthranilate + diphosphate = 5-phospho-alpha-D-ribose 1-diphosphate + anthranilate. It functions in the pathway amino-acid biosynthesis; L-tryptophan biosynthesis; L-tryptophan from chorismate: step 2/5. Its function is as follows. Catalyzes the transfer of the phosphoribosyl group of 5-phosphorylribose-1-pyrophosphate (PRPP) to anthranilate to yield N-(5'-phosphoribosyl)-anthranilate (PRA). In Leptospira interrogans serogroup Icterohaemorrhagiae serovar copenhageni (strain Fiocruz L1-130), this protein is Anthranilate phosphoribosyltransferase.